The chain runs to 121 residues: Basic phospholipase A2 homolog 2 (121 aa).

7 cysteine pairs are disulfide-bonded: C26-C115, C28-C44, C43-C95, C49-C121, C50-C88, C57-C81, and C75-C86. The segment at 105–117 is important for membrane-damaging activities in eukaryotes and bacteria; heparin-binding; it reads KKYRYHLKPLCKK.

This sequence belongs to the phospholipase A2 family. Group II subfamily. K49 sub-subfamily. In terms of assembly, homodimer; non-covalently linked (probable alternative/compact dimer conformation in solution). In terms of tissue distribution, expressed by the venom gland.

The protein resides in the secreted. Functionally, snake venom phospholipase A2 homolog that lacks enzymatic activity. Is myotoxic and displays edema-inducing activities in mouse paw. Also displays cytotoxic activity against myotubes. A model of myotoxic mechanism has been proposed: an apo Lys49-PLA2 is activated by the entrance of a hydrophobic molecule (e.g. fatty acid) at the hydrophobic channel of the protein leading to a reorientation of a monomer. This reorientation causes a transition between 'inactive' to 'active' states, causing alignment of C-terminal and membrane-docking sites (MDoS) side-by-side and putting the membrane-disruption sites (MDiS) in the same plane, exposed to solvent and in a symmetric position for both monomers. The MDoS region stabilizes the toxin on membrane by the interaction of charged residues with phospholipid head groups. Subsequently, the MDiS region destabilizes the membrane with penetration of hydrophobic residues. This insertion causes a disorganization of the membrane, allowing an uncontrolled influx of ions (i.e. calcium and sodium), and eventually triggering irreversible intracellular alterations and cell death. In Bothrops brazili (Brazil's lancehead), this protein is Basic phospholipase A2 homolog 2.